The sequence spans 209 residues: Amelotin (209 aa).

Positions 1-16 (MRSTILLFCLLGSTRS) are cleaved as a signal peptide. The interval 142 to 209 (AGANPDVQDG…ATTESANGIQ (68 aa)) is disordered.

It belongs to the amelotin family. In terms of processing, phosphorylated by FAM20C in vitro. Post-translationally, O-glycosylated.

The protein localises to the secreted. In terms of biological role, is a promoter of calcium phosphate mineralization, playing a critical role in the formation of the compact, mineralized, aprismatic enamel surface layer during the maturation stage of amelogenesis. This Homo sapiens (Human) protein is Amelotin (AMTN).